Reading from the N-terminus, the 330-residue chain is Ketol-acid reductoisomerase (NADP(+)) (330 aa).

The KARI N-terminal Rossmann domain occupies 2–182; sequence ARMYYDADAN…GGTRAGILET (181 aa). Residues 25–28, serine 51, serine 53, and 83–86 each bind NADP(+); these read YGSQ and DEFQ. Histidine 108 is a catalytic residue. NADP(+) is bound at residue glycine 134. The 146-residue stretch at 183–328 folds into the KARI C-terminal knotted domain; the sequence is SFREETETDL…KDLRAMFSWL (146 aa). The Mg(2+) site is built by aspartate 191, glutamate 195, glutamate 227, and glutamate 231. Serine 252 provides a ligand contact to substrate.

This sequence belongs to the ketol-acid reductoisomerase family. Mg(2+) serves as cofactor.

The catalysed reaction is (2R)-2,3-dihydroxy-3-methylbutanoate + NADP(+) = (2S)-2-acetolactate + NADPH + H(+). The enzyme catalyses (2R,3R)-2,3-dihydroxy-3-methylpentanoate + NADP(+) = (S)-2-ethyl-2-hydroxy-3-oxobutanoate + NADPH + H(+). It functions in the pathway amino-acid biosynthesis; L-isoleucine biosynthesis; L-isoleucine from 2-oxobutanoate: step 2/4. It participates in amino-acid biosynthesis; L-valine biosynthesis; L-valine from pyruvate: step 2/4. Involved in the biosynthesis of branched-chain amino acids (BCAA). Catalyzes an alkyl-migration followed by a ketol-acid reduction of (S)-2-acetolactate (S2AL) to yield (R)-2,3-dihydroxy-isovalerate. In the isomerase reaction, S2AL is rearranged via a Mg-dependent methyl migration to produce 3-hydroxy-3-methyl-2-ketobutyrate (HMKB). In the reductase reaction, this 2-ketoacid undergoes a metal-dependent reduction by NADPH to yield (R)-2,3-dihydroxy-isovalerate. This is Ketol-acid reductoisomerase (NADP(+)) from Synechococcus elongatus (strain ATCC 33912 / PCC 7942 / FACHB-805) (Anacystis nidulans R2).